Consider the following 358-residue polypeptide: Feruloyl CoA ortho-hydroxylase F6H1-3 (358 aa).

One can recognise a Fe2OG dioxygenase domain in the interval T200–P308. Residue Y216 coordinates 2-oxoglutarate. Residues H231, D233, and H289 each coordinate Fe cation. Residues R299 and S301 each coordinate 2-oxoglutarate.

It belongs to the iron/ascorbate-dependent oxidoreductase family. The cofactor is L-ascorbate. Requires Fe(2+) as cofactor. As to expression, mostly expressed in tubers, and, at low levels, in underground stems, stems, leaves and petioles.

It carries out the reaction (E)-feruloyl-CoA + 2-oxoglutarate + O2 = (E)-6-hydroxyferuloyl-CoA + succinate + CO2. The protein operates within phenylpropanoid metabolism. 2-oxoglutarate (OG)- and Fe(II)-dependent dioxygenase (2OGD) involved in scopoletin biosynthesis. Converts feruloyl CoA into 6'-hydroxyferuloyl CoA, and, at low efficiency, caffeoyl-CoA into 6'-hydroxycaffeate, but has no activity with p-coumaroyl-CoA. This is Feruloyl CoA ortho-hydroxylase F6H1-3 from Ipomoea batatas (Sweet potato).